A 395-amino-acid chain; its full sequence is tRNA-specific 2-thiouridylase MnmA (395 aa).

ATP-binding positions include 6–13 (AMSGGVDS) and Leu-32. Residue Cys-101 is the Nucleophile of the active site. A disulfide bond links Cys-101 and Cys-193. An ATP-binding site is contributed by Gly-125. An interaction with tRNA region spans residues 143-145 (KDQ). The active-site Cysteine persulfide intermediate is the Cys-193.

Belongs to the MnmA/TRMU family.

It localises to the cytoplasm. It catalyses the reaction S-sulfanyl-L-cysteinyl-[protein] + uridine(34) in tRNA + AH2 + ATP = 2-thiouridine(34) in tRNA + L-cysteinyl-[protein] + A + AMP + diphosphate + H(+). Functionally, catalyzes the 2-thiolation of uridine at the wobble position (U34) of tRNA, leading to the formation of s(2)U34. The polypeptide is tRNA-specific 2-thiouridylase MnmA (Corynebacterium jeikeium (strain K411)).